The primary structure comprises 324 residues: Fibronectin type III domain-containing protein 8 (324 aa).

A Fibronectin type-III domain is found at Pro179–Thr280.

In Homo sapiens (Human), this protein is Fibronectin type III domain-containing protein 8 (FNDC8).